The following is a 265-amino-acid chain: Esterase claE (265 aa).

Active-site charge relay system residues include S121, D211, and H239.

It belongs to the LovG family.

The protein operates within secondary metabolite biosynthesis. Functionally, esterase; part of the cla gene cluster that produces clavatol and ortho-quinone methide. The clavatol biosynthesis cluster cla and the terrestric acid cluster tra are both involved in the production of peniphenones and penilactones. The non-reducing PKS claF is responsible for the formation of clavatol from successive condensations of 3 malonyl-CoA units, presumably with a simple acetyl-CoA starter unit, and 2 methylation steps. The esterase claE probably collaborates with claF by catalyzing the hydrolysis of ACP-bound acyl intermediates to free the ACP from stalled intermediates. The clavatol oxidase claD then converts clavatol to hydroxyclavatol. Spontaneous dehydration of hydroxyclavatol leads to the accumulation of the highly active ortho-quinone methide. On the other hand, the PKS-NRPS hybrid traA is involved in the formation of crustosic acid, with the help of traB and traD. The polyketide synthase module (PKS) of traA is responsible for the synthesis of the polyketide backbone via the condensation of an acetyl-CoA starter unit with 3 malonyl-CoA units. The downstream nonribosomal peptide synthetase (NRPS) module then amidates the carboxyl end of the polyketide with L-malic acid. Because traA lacks a designated enoylreductase (ER) domain, the required activity is provided the enoyl reductase traG. Crustosic acid undergoes decarboxylation and isomerization to the terrestric acid, catalyzed by the 2-oxoglutarate-dependent dioxygenase traH. Both acids are further converted to the 2 gamma-butyrolactones (R)-5-methyltetronic acid and (S)-5-carboxylmethyltetronic acid, with involvement of the cytochrome P450 monooxygenase claJ. Spontaneous addition of the methide to these gamma-butyrolactones leads to peniphenone D and penilactone D, which undergo again stereospecific attacking by methide to give penilactones A and B. This Penicillium crustosum (Blue mold fungus) protein is Esterase claE.